We begin with the raw amino-acid sequence, 372 residues long: Cytochrome b (372 aa).

4 helical membrane passes run 25-45, 69-90, 105-125, and 170-190; these read FGSM…FLAI, WIMQ…YIHI, WFSG…GYVL, and FFAL…IHII. The heme b site is built by His-75 and His-89. His-174 and His-188 together coordinate heme b. His-193 is an a ubiquinone binding site. 4 consecutive transmembrane segments (helical) span residues 218-238, 280-300, 312-332, and 339-358; these read YKDM…LSFM, LGGT…PFTH, LAQT…WTAT, and FILI…IMNP.

This sequence belongs to the cytochrome b family. The cytochrome bc1 complex contains 3 respiratory subunits (MT-CYB, CYC1 and UQCRFS1), 2 core proteins (UQCRC1 and UQCRC2) and probably 6 low-molecular weight proteins. Requires heme b as cofactor.

It is found in the mitochondrion inner membrane. Its function is as follows. Component of the ubiquinol-cytochrome c reductase complex (complex III or cytochrome b-c1 complex) that is part of the mitochondrial respiratory chain. The b-c1 complex mediates electron transfer from ubiquinol to cytochrome c. Contributes to the generation of a proton gradient across the mitochondrial membrane that is then used for ATP synthesis. This Sinomicrurus japonicus (Coral snake) protein is Cytochrome b (MT-CYB).